The following is a 691-amino-acid chain: Two-component response regulator ORR21 (691 aa).

One can recognise a Response regulatory domain in the interval 17–132; sequence KVLVVDDDPT…ELKNIWQHVI (116 aa). At Asp-68 the chain carries 4-aspartylphosphate. Over residues 139–155 the composition is skewed to basic and acidic residues; it reads NKEHEHSGSLDDTDRTR. Positions 139 to 204 are disordered; that stretch reads NKEHEHSGSL…DPSSTSKKPR (66 aa). The segment at residues 199 to 258 is a DNA-binding region (myb-like GARP); it reads TSKKPRVVWSVELHQQFVNAVNHLGIDKAVPKKILELMNVPGLTRENVASHLQKFRLYLK.

The protein belongs to the ARR family. Type-B subfamily. In terms of processing, two-component system major event consists of a His-to-Asp phosphorelay between a sensor histidine kinase (HK) and a response regulator (RR). In plants, the His-to-Asp phosphorelay involves an additional intermediate named Histidine-containing phosphotransfer protein (HPt). This multistep phosphorelay consists of a His-Asp-His-Asp sequential transfer of a phosphate group between first a His and an Asp of the HK protein, followed by the transfer to a conserved His of the HPt protein and finally the transfer to an Asp in the receiver domain of the RR protein.

Its subcellular location is the nucleus. In terms of biological role, transcriptional activator that binds specific DNA sequence. Functions as a response regulator involved in His-to-Asp phosphorelay signal transduction system. Phosphorylation of the Asp residue in the receiver domain activates the ability of the protein to promote the transcription of target genes. May directly activate some type-A response regulators in response to cytokinins. The polypeptide is Two-component response regulator ORR21 (Oryza sativa subsp. japonica (Rice)).